Reading from the N-terminus, the 551-residue chain is Eukaryotic translation initiation factor 3 subunit D-2 (551 aa).

Residues 105–152 are disordered; sequence NNVRARGRTGRGSQAVGGPGGPAAGGSTANSTKYGKGRNTRNTQNVGR. The segment covering 119-128 has biased composition (gly residues); it reads AVGGPGGPAA. An RNA gate region spans residues 290–304; sequence QFDLLTVNETSLEPP.

It belongs to the eIF-3 subunit D family. In terms of assembly, component of the eukaryotic translation initiation factor 3 (eIF-3) complex. The eIF-3 complex interacts with pix.

Its subcellular location is the cytoplasm. Its function is as follows. mRNA cap-binding component of the eukaryotic translation initiation factor 3 (eIF-3) complex, which is involved in protein synthesis of a specialized repertoire of mRNAs and, together with other initiation factors, stimulates binding of mRNA and methionyl-tRNAi to the 40S ribosome. The eIF-3 complex specifically targets and initiates translation of a subset of mRNAs involved in cell proliferation. In the eIF-3 complex, eif3d specifically recognizes and binds the 7-methylguanosine cap of a subset of mRNAs. The sequence is that of Eukaryotic translation initiation factor 3 subunit D-2 from Drosophila erecta (Fruit fly).